The following is a 173-amino-acid chain: MMSRKKRRLWIVIACGIGLSTAVALMLFAFRSSLSFFMSPEQVAARHPPPGRVFRLGGIVQANTVVMGTRNGAPYTTFRITDGRASIPVVYTGVLPGLFRQGQGVVTIGAMAKGDSEFMASTVLAKHGADYMPRDVEMALRKAGKWNPKFGPPPNAGAWDDKSPAQIEASNNG.

Residues 1-8 (MMSRKKRR) lie on the Cytoplasmic side of the membrane. Residues 9–29 (LWIVIACGIGLSTAVALMLFA) traverse the membrane as a helical; Signal-anchor for type II membrane protein segment. At 30 to 173 (FRSSLSFFMS…PAQIEASNNG (144 aa)) the chain is on the periplasmic side. Heme is bound by residues His127 and Tyr131. The interval 145-173 (KWNPKFGPPPNAGAWDDKSPAQIEASNNG) is disordered.

It belongs to the CcmE/CycJ family.

It localises to the cell inner membrane. Heme chaperone required for the biogenesis of c-type cytochromes. Transiently binds heme delivered by CcmC and transfers the heme to apo-cytochromes in a process facilitated by CcmF and CcmH. This is Cytochrome c-type biogenesis protein CcmE from Acidiphilium cryptum (strain JF-5).